The sequence spans 159 residues: ATP synthase subunit b 2 (159 aa).

Residues 1–21 form a helical membrane-spanning segment; sequence MDATFWALVALIIFVGILLYM.

The protein belongs to the ATPase B chain family. In terms of assembly, F-type ATPases have 2 components, F(1) - the catalytic core - and F(0) - the membrane proton channel. F(1) has five subunits: alpha(3), beta(3), gamma(1), delta(1), epsilon(1). F(0) has three main subunits: a(1), b(2) and c(10-14). The alpha and beta chains form an alternating ring which encloses part of the gamma chain. F(1) is attached to F(0) by a central stalk formed by the gamma and epsilon chains, while a peripheral stalk is formed by the delta and b chains.

The protein resides in the cell inner membrane. In terms of biological role, f(1)F(0) ATP synthase produces ATP from ADP in the presence of a proton or sodium gradient. F-type ATPases consist of two structural domains, F(1) containing the extramembraneous catalytic core and F(0) containing the membrane proton channel, linked together by a central stalk and a peripheral stalk. During catalysis, ATP synthesis in the catalytic domain of F(1) is coupled via a rotary mechanism of the central stalk subunits to proton translocation. Functionally, component of the F(0) channel, it forms part of the peripheral stalk, linking F(1) to F(0). This Chelativorans sp. (strain BNC1) protein is ATP synthase subunit b 2.